Reading from the N-terminus, the 439-residue chain is Exodeoxyribonuclease 7 large subunit (439 aa).

Belongs to the XseA family. In terms of assembly, heterooligomer composed of large and small subunits.

Its subcellular location is the cytoplasm. The catalysed reaction is Exonucleolytic cleavage in either 5'- to 3'- or 3'- to 5'-direction to yield nucleoside 5'-phosphates.. Bidirectionally degrades single-stranded DNA into large acid-insoluble oligonucleotides, which are then degraded further into small acid-soluble oligonucleotides. The protein is Exodeoxyribonuclease 7 large subunit of Haemophilus influenzae (strain 86-028NP).